Consider the following 147-residue polypeptide: Phospholipase A2 inhibitor subunit B (147 aa).

Residues 62 to 143 (EICEEAGGHI…DEKLLVVCEF (82 aa)) enclose the C-type lectin domain. Disulfide bonds link C64–C141 and C119–C133. N103 is a glycosylation site (N-linked (GlcNAc...) asparagine).

The protein belongs to the alpha-type phospholipase A2 inhibitor family. In terms of assembly, homo- or heterotrimer; homotrimer of PLI-A chains, two PLI-A and one PLI-B chains, one PLI-A and two PLI-B chains, and homotrimer of PLI-B chains (with a ratio of 1:3:3:1). Expressed by the liver.

The protein localises to the secreted. Functionally, PLI binds directly phospholipase A2 in the presence or absence of calcium. Inhibitory activity of the PLI-B homotrimer is less specific than that of the PLI-A homotrimer. This Protobothrops flavoviridis (Habu) protein is Phospholipase A2 inhibitor subunit B.